We begin with the raw amino-acid sequence, 309 residues long: tRNA uridine(34) hydroxylase (309 aa).

Positions 130–224 constitute a Rhodanese domain; sequence SDPDTIVIDT…YLEEVPQEES (95 aa). Cys-184 acts as the Cysteine persulfide intermediate in catalysis.

It belongs to the TrhO family.

It catalyses the reaction uridine(34) in tRNA + AH2 + O2 = 5-hydroxyuridine(34) in tRNA + A + H2O. In terms of biological role, catalyzes oxygen-dependent 5-hydroxyuridine (ho5U) modification at position 34 in tRNAs. The polypeptide is tRNA uridine(34) hydroxylase (Rhizobium leguminosarum bv. trifolii (strain WSM2304)).